The following is a 116-amino-acid chain: MLKSQFQQKKMTRNYTGAWQKTPGRLLGIFLIRFYQITLSSLIGNQCRHAPTCSEYIYEAIARHGLWAGAWMGLFRIMRCGPFGTDGFDPVPPSLGHSCCFYKPWRYWKISDKHNK.

The protein belongs to the UPF0161 family.

The protein localises to the cell inner membrane. Could be involved in insertion of integral membrane proteins into the membrane. This Bartonella tribocorum (strain CIP 105476 / IBS 506) protein is Putative membrane protein insertion efficiency factor.